A 536-amino-acid chain; its full sequence is Probable monofunctional riboflavin biosynthesis protein RIBA 3, chloroplastic (536 aa).

The N-terminal 43 residues, 1–43 (MDRVLLSSQLSSQTVVNTRVQQGSGGINSIGFAVIRKGSLKLR), are a transit peptide targeting the chloroplast. An inactive DHBP synthase region spans residues 44-310 (CYAIGGLGGG…IADLIRYRRK (267 aa)). D-ribulose 5-phosphate-binding positions include 133–134 (GD), D138, and 248–252 (RAGHT). Residues 311–536 (REKLVELIAV…GDQDEDDTHN (226 aa)) are GTP cyclohydrolase II. 361–365 (RVHSE) provides a ligand contact to GTP. 3 residues coordinate Zn(2+): C366, C377, and C379. Residues Q382, 405–407 (EGR), and T427 each bind GTP. The active-site Proton acceptor; for GTP cyclohydrolase activity is the D439. Residue R441 is the Nucleophile; for GTP cyclohydrolase activity of the active site. Positions 462 and 467 each coordinate GTP. Positions 507–536 (YGSDLPGNVPEEFLNPDDIAGDQDEDDTHN) are disordered. Residues 525–536 (IAGDQDEDDTHN) are compositionally biased toward acidic residues.

The protein in the N-terminal section; belongs to the DHBP synthase family. It in the C-terminal section; belongs to the GTP cyclohydrolase II family. Zn(2+) is required as a cofactor.

It is found in the plastid. It localises to the chloroplast. It catalyses the reaction GTP + 4 H2O = 2,5-diamino-6-hydroxy-4-(5-phosphoribosylamino)-pyrimidine + formate + 2 phosphate + 3 H(+). It participates in cofactor biosynthesis; riboflavin biosynthesis; 5-amino-6-(D-ribitylamino)uracil from GTP: step 1/4. Involved in riboflavin biosynthesis. Catalyzes the conversion of GTP to 2,5-diamino-6-ribosylamino-4(3H)-pyrimidinone 5'-phosphate (DARP), formate and pyrophosphate. The protein is Probable monofunctional riboflavin biosynthesis protein RIBA 3, chloroplastic (RIBA3) of Oryza sativa subsp. japonica (Rice).